A 146-amino-acid chain; its full sequence is UPF0178 protein BC_3040 (146 aa).

This sequence belongs to the UPF0178 family.

The polypeptide is UPF0178 protein BC_3040 (Bacillus cereus (strain ATCC 14579 / DSM 31 / CCUG 7414 / JCM 2152 / NBRC 15305 / NCIMB 9373 / NCTC 2599 / NRRL B-3711)).